A 62-amino-acid chain; its full sequence is Photosystem II reaction center protein Z (62 aa).

The next 2 membrane-spanning stretches (helical) occupy residues Ala8–Ala28 and Phe41–Ile61.

It belongs to the PsbZ family. PSII is composed of 1 copy each of membrane proteins PsbA, PsbB, PsbC, PsbD, PsbE, PsbF, PsbH, PsbI, PsbJ, PsbK, PsbL, PsbM, PsbT, PsbY, PsbZ, Psb30/Ycf12, at least 3 peripheral proteins of the oxygen-evolving complex and a large number of cofactors. It forms dimeric complexes.

It is found in the plastid. Its subcellular location is the chloroplast thylakoid membrane. In terms of biological role, may control the interaction of photosystem II (PSII) cores with the light-harvesting antenna, regulates electron flow through the 2 photosystem reaction centers. PSII is a light-driven water plastoquinone oxidoreductase, using light energy to abstract electrons from H(2)O, generating a proton gradient subsequently used for ATP formation. This Vitis vinifera (Grape) protein is Photosystem II reaction center protein Z.